Consider the following 1183-residue polypeptide: Phospholipid-transporting ATPase FetA (1183 aa).

The next 3 membrane-spanning stretches (helical) occupy residues 96–116, 299–319, and 348–368; these read ISSL…SITG, VLVV…SIGH, and ALIF…SLYV. Catalysis depends on D416, which acts as the 4-aspartylphosphate intermediate. ATP contacts are provided by D416, K417, T418, E519, F560, K583, R617, T697, G698, D699, R812, and K818. D416 contributes to the Mg(2+) binding site. Mg(2+) is bound at residue T418. Position 838 (D838) interacts with Mg(2+). 2 residues coordinate ATP: N841 and D842. Residue D842 coordinates Mg(2+). A run of 6 helical transmembrane segments spans residues 904–924, 927–947, 981–1001, 1014–1034, 1049–1069, and 1090–1110; these read FAFT…AQTV, IWFI…GLSL, CLLH…GTVF, FQSF…MQIA, WGSL…GLCL, and IWLC…GYNF.

It belongs to the cation transport ATPase (P-type) (TC 3.A.3) family. Type IV subfamily. Mg(2+) is required as a cofactor. Highly expressed in testis.

The protein resides in the cytoplasmic vesicle. Its subcellular location is the secretory vesicle. It localises to the acrosome membrane. The catalysed reaction is ATP + H2O + phospholipidSide 1 = ADP + phosphate + phospholipidSide 2.. Functionally, P4-ATPase flippase which catalyzes the hydrolysis of ATP coupled to the transport of aminophospholipids from the outer to the inner leaflet of various membranes and ensures the maintenance of asymmetric distribution of phospholipids. Phospholipid translocation also seems to be implicated in vesicle formation and in uptake of lipid signaling molecules. May play a role in phospholid transport across membranes and in acrosome formation. In Mus musculus (Mouse), this protein is Phospholipid-transporting ATPase FetA (Atp8b5).